The following is a 569-amino-acid chain: Toxin YxiD (569 aa).

The region spanning 1-235 (MKTLDVHALH…NPQMKQADDS (235 aa)) is the LXG domain. A coiled-coil region spans residues 8 to 91 (ALHEGIQHTI…QHAISSVESN (84 aa)). A disordered region spans residues 548-569 (HQAGIHGTGSPANELFKGGKKK).

In the N-terminal section; belongs to the LXG family. Probably interacts with cognate immunity protein YxxD but not with non-cognate immunity proteins. The interaction inhibits the toxic activity of YxxD.

It localises to the secreted. Its function is as follows. Toxic component of one of 6 LXG toxin-immunity modules in this strain. They promote kin selection, mediate competition in biofilms, and drive spatial segregation of different strains, indicating that LXG toxins may help avoid warfare between strains in biofilms. Mediates intercellular competition during biofilm formation; disruption of the operon disadvantages the bacteria, but overexpression of the cognate immunity protein restores growth in competition with wild-type. Overexpression alone in situ causes growth arrest but not cell lysis, a large decrease in chromosomal DNA content and the production of anucleate cells. No effect is seen on rRNA. Co-overexpression with cognate immunity protein YxxD does not cause growth arrest. The toxic effect is not dependent on the epsA and tapA operons which are required for biofilm formation. The chain is Toxin YxiD (yxiD) from Bacillus subtilis (strain 168).